The sequence spans 126 residues: Small ribosomal subunit protein uS12 (126 aa).

Asp89 carries the 3-methylthioaspartic acid modification. The interval 99 to 126 (RGSLDTSGVNDRKQGRSKYGTKKPKDKK) is disordered. Basic residues predominate over residues 113–126 (GRSKYGTKKPKDKK).

Belongs to the universal ribosomal protein uS12 family. Part of the 30S ribosomal subunit. Contacts proteins S8 and S17. May interact with IF1 in the 30S initiation complex.

In terms of biological role, with S4 and S5 plays an important role in translational accuracy. Its function is as follows. Interacts with and stabilizes bases of the 16S rRNA that are involved in tRNA selection in the A site and with the mRNA backbone. Located at the interface of the 30S and 50S subunits, it traverses the body of the 30S subunit contacting proteins on the other side and probably holding the rRNA structure together. The combined cluster of proteins S8, S12 and S17 appears to hold together the shoulder and platform of the 30S subunit. The sequence is that of Small ribosomal subunit protein uS12 from Legionella pneumophila (strain Paris).